The following is a 146-amino-acid chain: uncharacterized protein (146 aa).

This is an uncharacterized protein from Arabidopsis thaliana (Mouse-ear cress).